We begin with the raw amino-acid sequence, 265 residues long: Capsule polysaccharide export inner-membrane protein CtrC (265 aa).

The next 6 helical transmembrane spans lie at 37-57 (IGFL…VLMW), 64-84 (NVSA…MMMW), 121-141 (IAGA…IGWI), 147-167 (IFYM…LGLV), 178-198 (FGKV…VFFF), and 236-256 (NPWY…AVVA). One can recognise an ABC transmembrane type-2 domain in the interval 37 to 258 (IGFLWLFVEP…LLGLAVVARF (222 aa)).

This sequence belongs to the ABC-2 integral membrane protein family.

It localises to the cell inner membrane. Its function is as follows. May form an ATP-driven capsule polysaccharide export apparatus, in association with the CtrB and CtrD proteins. This chain is Capsule polysaccharide export inner-membrane protein CtrC (ctrC), found in Neisseria meningitidis serogroup A / serotype 4A (strain DSM 15465 / Z2491).